The chain runs to 66 residues: Large ribosomal subunit protein bL31 (66 aa).

Residues cysteine 16, cysteine 18, cysteine 36, and cysteine 39 each coordinate Zn(2+).

It belongs to the bacterial ribosomal protein bL31 family. Type A subfamily. In terms of assembly, part of the 50S ribosomal subunit. It depends on Zn(2+) as a cofactor.

Binds the 23S rRNA. The polypeptide is Large ribosomal subunit protein bL31 (Geobacillus kaustophilus (strain HTA426)).